A 299-amino-acid polypeptide reads, in one-letter code: Protein LacX, plasmid (299 aa).

The protein is Protein LacX, plasmid (lacX) of Lactococcus lactis subsp. lactis (Streptococcus lactis).